The primary structure comprises 212 residues: Fucoxanthin-chlorophyll a-c binding protein E, chloroplastic (212 aa).

The N-terminal 34 residues, 1–34, are a transit peptide targeting the chloroplast; sequence MAIACAAAPGLRGAEPFNGAALATSAKSSSAMKM. 3 helical membrane passes run 76 to 96, 117 to 137, and 178 to 198; these read IAML…PGML, IPPL…LFVV, and GRAA…SNQP.

It belongs to the fucoxanthin chlorophyll protein family. In terms of assembly, the LHC complex of chromophytic algae is composed of fucoxanthin, chlorophyll A and C bound non-covalently by fucoxanthin chlorophyll proteins (FCPs). The ratio of pigments in this LHC is; fucoxanthin: chlorophyll C: chlorophyll A; (0.6-1): (0.1-0.3): (1).

The protein resides in the plastid. It is found in the chloroplast thylakoid membrane. The light-harvesting complex (LHC) functions as a light receptor, it captures and delivers excitation energy to photosystems with which it is closely associated. Energy is transferred from the carotenoid and chlorophyll C (or B) to chlorophyll A and the photosynthetic reaction centers where it is used to synthesize ATP and reducing power. The protein is Fucoxanthin-chlorophyll a-c binding protein E, chloroplastic (FCPE) of Macrocystis pyrifera (Giant kelp).